We begin with the raw amino-acid sequence, 1704 residues long: MEYKSIEKSIVRESKVRNVFSKVCKKELFYTNLKVNSASEELLKSSKSLFAYPSSIGGGSCLSITKLSNHGKVPDTPFCIKGHTDPISCFEFSNFNDYVIATGSRDCTIKIWEVPEEGLIKDNLVTPLITLPKQQKRVTGVYFHPSVDSLFMSSTLDYTLDIWDLSSTGEQSSVIQKLTGHEDLIMSVGWNTWSGGDKLATSSRDKKMRLYDPRSQSTPIQTISTHEGAQGFKLCWADSNGLELICTVGANKSAQRQLYLWDPRQLQSSQPLVSKDVTTDSSILSPYYDFGTNMVYLGGKGDGIYYYEIEKNNAHHIGKATFGNVTQSAITLLPKSVVDVNICEIDRFLRLTAANSVEMVSFMCPRKSQLFQEDIFPPCPSGDPTTDCSLWFADKQLKVIPHTISMKPDGVQSIYEVSEEEGGKSKEKDKLEQLSKLSIGNSGSGGGGGDGDGNGGDSPFITEGIVKQEIEGWLFNSYENRYLKIVKDKIYCFLNEDSAQAIWDSPVLNIKYVDIYDEDENTSGEEWSLRFNIILLNGKEHRMECSTVKQRDAWCQSINAYREMKQQVDQSVVSPTMGEFHLVNTTPVAPSPMVISENKNALQKFSVPSPKEQQQQQQQGSESPNSTTPKSSTPTQTRHHSVLSRNPSYTSLKSSGGFSKPSPSSSTSTPPSTFASPLSIAQTSSTTTTTTTTTTTTSSSSTPPPLRANNSTSSTPLNSSTGIKQSDIVIEGNLTELIPGLLWNSNTEKWYVVSEGMLYSYKNKSLKQLDPLETIHLEKAISAHKTKEIFTIQGFSFQLSTPNRIIHLLAKTKEERGSWLSVLRQNLKSSGETKPKSVLTRASTMDELISSPMSDDESNTNEGGVEEEEEEQPLEGQLSRKLPGIFSMWGQCFVALLAEDLFVSRNKLSTTPELRIQLSSISLIKKISPNEFTLYDSMNQVVCNFRTIAPTAEFDDCTRWIDGLEAARKRSIDIIKMFGINEKEVLSPLPSSSSIPSSGSNGNLLDPSADDLTRYLDLTAIKNGKQKILIQVKGKRKIRVRMVKLSTSSLNCHNSFILDAGPRIFVWAGSKTSRVNKAKALDFANRIRTKERGGKSTLIQLDQGRDEQSFDFWEILGGNSSDPIATTPTPEEQDTESIKTTIYRVGLDVKKNSLRARLAWEGTDWKLPNKEILNTKFVYVVDCVTEIFVWVGKESSSIQRKMATKVALVLQAQKDRVDWTKITRLTEFGENNLFKEKFANYPGMLPISTTRQEIKSHVATSKVEHKIETLASRMTTPFIDNEALFTIPIDEGGRVKVWKIEDYEKIDHPQHLYSQFFSSDSYIVLYTYMQNNKEAHVIYYYLGRDSSINEKGTSAYLTVDLNESLVGACVQTRVVANKECKNFLNLFKTKMVIHKGKYNNYDPKKPSLYQVKGLDKIDIRAVQVEFSSSMLNTLHVSILRTPEKIYIWHGKFSLDAEQNSALSIAENFNSTSAPIEILKEGSESNEFWSAFESTGGRQKYFNDIMIQSSSIPTSFTYKPRFFVCSNASGIVEVTEESPFSQDDLDIGSVCILDVQSHIYLWIGSRATHRTKRASMEVVLNFIETSKLGHSKEHTKVLIATPFEEPIGFKSYFRAWCTSKYPKNKLPLVEKDGIPVEQVLKDYLKEIYTYEELLADPLPAGVDSTKLDTYLNDEDFEKVFKMTRTEWLKIPAWKREGIKKELFLF.

4 WD repeats span residues 82–122 (GHTD…LIKD), 133–173 (KQQK…EQSS), 180–221 (GHED…TPIQ), and 225–271 (THEG…SSQP). Disordered stretches follow at residues 439–460 (IGNSGSGGGGGDGDGNGGDSPF) and 606–721 (SVPS…NSST). Residues 442–456 (SGSGGGGGDGDGNGG) are compositionally biased toward gly residues. Residues 459–563 (PFITEGIVKQ…WCQSINAYRE (105 aa)) enclose the PH 1 domain. Low complexity-rich tracts occupy residues 613–636 (QQQQQQQGSESPNSTTPKSSTPTQ), 651–701 (SLKS…SSSS), and 709–721 (NNSTSSTPLNSST). 2 PH domains span residues 727 to 828 (DIVI…QNLK) and 871 to 969 (EQPL…AARK). The tract at residues 848 to 877 (LISSPMSDDESNTNEGGVEEEEEEQPLEGQ) is disordered. Acidic residues predominate over residues 854-873 (SDDESNTNEGGVEEEEEEQP). Gelsolin-like repeat units lie at residues 1025 to 1119 (KQKI…LGGN), 1138 to 1241 (IKTT…FANY), 1293 to 1390 (GRVK…FKTK), 1404 to 1494 (KKPS…FEST), and 1520 to 1615 (RFFV…FRAW). An HP domain is found at 1641–1704 (DYLKEIYTYE…EGIKKELFLF (64 aa)).

The protein resides in the membrane. The protein localises to the cytoplasm. It is found in the cytoskeleton. Functionally, may function as a linker between membranes and the actin cytoskeleton. The polypeptide is Villidin (vilA) (Dictyostelium discoideum (Social amoeba)).